The primary structure comprises 422 residues: Ribosomal RNA small subunit methyltransferase B (422 aa).

Residues 254–260 (CAAPGGK), Asp277, Asp303, and Asp322 each bind S-adenosyl-L-methionine. Catalysis depends on Cys375, which acts as the Nucleophile.

This sequence belongs to the class I-like SAM-binding methyltransferase superfamily. RsmB/NOP family.

Its subcellular location is the cytoplasm. It catalyses the reaction cytidine(967) in 16S rRNA + S-adenosyl-L-methionine = 5-methylcytidine(967) in 16S rRNA + S-adenosyl-L-homocysteine + H(+). In terms of biological role, specifically methylates the cytosine at position 967 (m5C967) of 16S rRNA. The chain is Ribosomal RNA small subunit methyltransferase B from Proteus mirabilis (strain HI4320).